We begin with the raw amino-acid sequence, 256 residues long: Venom allergen-1 (256 aa).

The signal sequence occupies residues 1-21 (MAFNGIALLITATIFIGSCYA). The region spanning 65-211 (LNTHNKLRAE…MINYYLVCNY (147 aa)) is the SCP domain. Residues N146 and N210 are each glycosylated (N-linked (GlcNAc...) asparagine).

It belongs to the CRISP family.

The protein resides in the secreted. Its function is as follows. Activates autophagy in human monocytic cells, dendritic cells and macrophages. In terms of biological role, (Microbial infection) Promotes Zika virus replication in human dendritic cells and macrophages. Facilitates Zika virus transmission from infected mosquitoes to the host in mouse model. This Aedes albopictus (Asian tiger mosquito) protein is Venom allergen-1.